Reading from the N-terminus, the 101-residue chain is MSLQVSHYNMLRASHEGSQKVVVRTVITVRFVPGAAIAKSILYCAGQLVFKESGHHLTGTDTIYFVTVRLHMHNSTYSSIFCFSMSVLLSRRRVSGDLTCR.

This is an uncharacterized protein from Escherichia coli (strain K12).